A 295-amino-acid polypeptide reads, in one-letter code: Autophagy-related protein 37 (295 aa).

In terms of domain architecture, ACB spans 5-103 (VDRVFVHALN…LIDTMHRYAT (99 aa)). Disordered regions lie at residues 124 to 162 (NSPS…PLKE) and 174 to 201 (LRSQ…RWQR). Residues 125-153 (SPSSSLSSPRPNQSTGAGAQQPQQEPEQA) show a composition bias toward low complexity. Asn136 is a glycosylation site (N-linked (GlcNAc...) asparagine). Residues 244-264 (WLLVKHIFADLVILSVVLLWL) traverse the membrane as a helical segment.

Belongs to the ATG37 family.

It is found in the peroxisome membrane. Its function is as follows. Acyl-CoA binding protein which acts as the peroxisome receptor for pexophagy. Required for both micropexophagy and macropexophagy, but not for the cytoplasm to vacuole transport (Cvt) or autophagy pathways. Required for functional micropexophagic apparatus (MIPA) and relocation of ATG11 to the peroxisome-sequestering arms of the vacuole. Binds palmitoyl-CoA but not oleyl-CoA. This Gibberella zeae (strain ATCC MYA-4620 / CBS 123657 / FGSC 9075 / NRRL 31084 / PH-1) (Wheat head blight fungus) protein is Autophagy-related protein 37.